The following is a 387-amino-acid chain: S-adenosylmethionine synthase (387 aa).

His-16 provides a ligand contact to ATP. Asp-18 lines the Mg(2+) pocket. Glu-44 serves as a coordination point for K(+). Glu-57 and Gln-100 together coordinate L-methionine. Residues 100–110 (QSPDIAQGVDR) are flexible loop. ATP contacts are provided by residues 167–169 (DAK), 232–233 (RF), Asp-241, 247–248 (RK), Ala-264, and Lys-268. Residue Asp-241 participates in L-methionine binding. Lys-272 contributes to the L-methionine binding site.

The protein belongs to the AdoMet synthase family. Homotetramer; dimer of dimers. It depends on Mg(2+) as a cofactor. The cofactor is K(+).

Its subcellular location is the cytoplasm. The enzyme catalyses L-methionine + ATP + H2O = S-adenosyl-L-methionine + phosphate + diphosphate. It participates in amino-acid biosynthesis; S-adenosyl-L-methionine biosynthesis; S-adenosyl-L-methionine from L-methionine: step 1/1. Functionally, catalyzes the formation of S-adenosylmethionine (AdoMet) from methionine and ATP. The overall synthetic reaction is composed of two sequential steps, AdoMet formation and the subsequent tripolyphosphate hydrolysis which occurs prior to release of AdoMet from the enzyme. This chain is S-adenosylmethionine synthase, found in Cupriavidus necator (strain ATCC 17699 / DSM 428 / KCTC 22496 / NCIMB 10442 / H16 / Stanier 337) (Ralstonia eutropha).